We begin with the raw amino-acid sequence, 149 residues long: Snake venom vascular endothelial growth factor toxin 2 (149 aa).

An N-terminal signal peptide occupies residues 1 to 24 (MAAYLLAVAILFCIQGWPSGTVQG). Glutamine 25 is modified (pyrrolidone carboxylic acid). 3 disulfide bridges follow: cysteine 38–cysteine 80, cysteine 69–cysteine 115, and cysteine 73–cysteine 117. The tract at residues 118-149 (RPRSGRVNSGKRKRNPEEGGAESQVPLGLTSF) is disordered.

The protein belongs to the PDGF/VEGF growth factor family. Snake venom VEGF subfamily. Homodimer; disulfide-linked. Interacts with VEGF receptor-1 (FLT1) with a high affinity, whereas it binds to VEGF receptor-2 (KDR) with a low affinity. Does not bind VEGF receptor-3 (FLT4). In terms of tissue distribution, expressed by the venom gland.

It localises to the secreted. In terms of biological role, snake venom VEGFs that may contribute to venom dispersion and prey subjugation by inducing vascular permeability and hypotension. This protein induces an increase in capillary permeability after intradermal injection, as well as a drastic hypotensive effect after intravenous injection. The hypotension is mediated by nitric oxide (NO), which is produced by VEGF-activated endothelium NO synthase. Also induces angiogenesis in vitro. Like other crotalid VEGFs, this protein interacts with VEGF receptor-1 (FLT1) with a high affinity, whereas it binds to VEGF receptor-2 (KDR) with a low affinity. In Sistrurus catenatus edwardsii (Desert massasauga), this protein is Snake venom vascular endothelial growth factor toxin 2.